The sequence spans 185 residues: MSAMPDHWIKEKALKEGMISPFVDHKEEAGVLSYGLSSYGYDARVDSKFKIFANTHSSIVDPKNFPQDSFIDKETDVCIMPPNSFMLAKTVEYFRIPKDVIVICVGKSTYARCGIVVSVTPLEPGWEGYVTLEFSNTAPLPVKVYAFEGACQFIFLAGNERCSISYDQVNGKYMRQGGVTLPIVS.

DCTP is bound by residues 107–112 (KSTYAR), 131–133 (TLE), Gln-152, Tyr-166, and Gln-176. The active-site Proton donor/acceptor is the Glu-133.

It belongs to the dCTP deaminase family. As to quaternary structure, homotrimer.

The enzyme catalyses dCTP + H2O + H(+) = dUTP + NH4(+). The protein operates within pyrimidine metabolism; dUMP biosynthesis; dUMP from dCTP (dUTP route): step 1/2. Catalyzes the deamination of dCTP to dUTP. The sequence is that of dCTP deaminase from Anaplasma marginale (strain Florida).